An 848-amino-acid chain; its full sequence is Neprilysin-11 (848 aa).

Topologically, residues 1 to 74 (MPFGNDPPDY…WWKSRTTMEK (74 aa)) are cytoplasmic. Residues 75–95 (LLLPVLLLFCLLTAVLLAVII) traverse the membrane as a helical; Signal-anchor for type II membrane protein segment. Topologically, residues 96–848 (NTDKRIEAMK…VNPDHKCIVW (753 aa)) are extracellular. Positions 108-161 (HATQTEHAGFGDPTENPTKTAEDPRVPPIVPEAPTSPEPEVTTSTEKPKEPEVC) are disordered. Residues 133–144 (VPPIVPEAPTSP) show a composition bias toward pro residues. Residues 160–848 (VCSTPGCVRA…VNPDHKCIVW (689 aa)) form the Peptidase M13 domain. Cysteine 161 and cysteine 166 are oxidised to a cystine. Residues asparagine 178, asparagine 249, asparagine 284, asparagine 312, asparagine 337, asparagine 364, asparagine 398, and asparagine 438 are each glycosylated (N-linked (GlcNAc...) asparagine). 4 cysteine pairs are disulfide-bonded: cysteine 184/cysteine 833, cysteine 192/cysteine 793, cysteine 247/cysteine 509, and cysteine 719/cysteine 845. Residue histidine 682 participates in Zn(2+) binding. The active site involves glutamate 683. A Zn(2+)-binding site is contributed by histidine 686. An N-linked (GlcNAc...) asparagine glycan is attached at asparagine 726. Glutamate 744 is a Zn(2+) binding site. The active-site Proton donor is aspartate 748.

The protein belongs to the peptidase M13 family. Zn(2+) is required as a cofactor.

Its subcellular location is the cell membrane. In terms of biological role, probable cell surface protease. The protein is Neprilysin-11 (nep-11) of Caenorhabditis elegans.